Consider the following 338-residue polypeptide: Serpentine receptor class alpha-31 (338 aa).

Transmembrane regions (helical) follow at residues 23 to 43, 59 to 79, 108 to 125, 142 to 162, 188 to 208, 240 to 260, and 276 to 296; these read GNHCFILLIIISSVFLTVFAI, LLFSAIINGVVHHWSIAGIRI, LYYYTNLFSSLCCISLFF, FSKIFLLFQSISPFGILYWIF, VNEFRLYILGTFFVLSFVIFF, VCIIIATQITCLVTTASTTEI, and SIAFMTGLTYSNFFLPIIIIY.

Belongs to the nematode receptor-like protein sra family.

It localises to the membrane. This is Serpentine receptor class alpha-31 (sra-31) from Caenorhabditis elegans.